We begin with the raw amino-acid sequence, 134 residues long: uncharacterized protein (134 aa).

This is an uncharacterized protein from Human cytomegalovirus (strain AD169) (HHV-5).